The following is a 144-amino-acid chain: 3-hydroxyacyl-[acyl-carrier-protein] dehydratase FabZ (144 aa).

Residue H51 is part of the active site.

It belongs to the thioester dehydratase family. FabZ subfamily.

It localises to the cytoplasm. It catalyses the reaction a (3R)-hydroxyacyl-[ACP] = a (2E)-enoyl-[ACP] + H2O. In terms of biological role, involved in unsaturated fatty acids biosynthesis. Catalyzes the dehydration of short chain beta-hydroxyacyl-ACPs and long chain saturated and unsaturated beta-hydroxyacyl-ACPs. This Clostridium botulinum (strain ATCC 19397 / Type A) protein is 3-hydroxyacyl-[acyl-carrier-protein] dehydratase FabZ.